The primary structure comprises 100 residues: Urease subunit gamma (100 aa).

This sequence belongs to the urease gamma subunit family. Heterotrimer of UreA (gamma), UreB (beta) and UreC (alpha) subunits. Three heterotrimers associate to form the active enzyme.

The protein localises to the cytoplasm. It catalyses the reaction urea + 2 H2O + H(+) = hydrogencarbonate + 2 NH4(+). Its pathway is nitrogen metabolism; urea degradation; CO(2) and NH(3) from urea (urease route): step 1/1. This is Urease subunit gamma from Marinobacter nauticus (strain ATCC 700491 / DSM 11845 / VT8) (Marinobacter aquaeolei).